We begin with the raw amino-acid sequence, 1453 residues long: MIVLTLCLFLVLYNSVICTSNNECVQVNVTQLPGNENIIRDFLFQNFKEEGTVVVGGYYPTEVWYNCSRTARTQAFKTFSNIHAFYFDMEAMENSTGDARGKPLLVHVHGNPVSIIVYISAYRHDVQGRPKLKHGLLCITKNSTTDYDRFTANQWRDICLGEDRKIPFSVVPTDNGTKLFGLEWNDDYVTAYISDDSHYLNINNNWFNNVTLLYSRSSTATWQHSAAYVYQGVSNFTYYKLNNTNGLKSYELCEDYEYCTGYATNVFAPTPGGYIPEGFSFNNWFMLTNSSTFVSGRFVTNQPLLVNCLWPVPSFGVAAQEFCFEGAQFSQCNGVSLNNTVDVIRFNLNFTTDVQSGMGATVFSLNTTGGVILDISCYNDTVSESSFYSYGEIPFGVIDGPRYCYVLYNGTALKYLGTLPPSVKEIAISKWGHFYINGYNFFSTFPIDCISFNLTTGASGAFWTIAYTSYTEALVQVENTAIKKVTYCNSHVNSIKCSQLTANLQNGFYPVASSEVGLVNKSVVLLPSFYSHTSVNITIDLGMRRSGYGQPVASSLSNISLPMQDNNTDVYCIRSNQFSFYVHSNCKSASWDNIFNSACTDVLEATAVIKTGTCPFSFDKLNNYLTFNKFCLSLNPTGANCKFDVVARTRTNEQGVGSLYVIYEEGDNIVGVPSDNSGLHDLSVLHLDSCTDYNIYGRNGVGIIRKTNSTLLSGLYYTSLSGDLLGFKNVSDGVVYSVTPCEVSAQAAVIDGAIVGAMTSINSELLGLTHWTTTPNFYYYSIYNYTNERVRGTVTDSNDVDCEPIITYSNIGVCKNGALVFINVTHSDGDVQPISTGNVTIPTNFTISVQVEYIQVYTTPVSIDCSRYVCNGNSRCNKLLTQYVSACHTIEQALAMGARLENMEIDSMLFVSENALKLASVEAFNSTDNLDPIYREWPNIGGSWLGGLKDILPSHNSKRKYRSAIEDLLFDKVVTSGLGTVDEDYKRCTGGYDIADLVCAQYYNGIMVLPGVANDDKMAMYTASLAGGITLGALGGGAVSIPFAVAVQARLNYVALQTDVLNKNQQILANAFNQAIGNITQAFGNVNDAIHQTSKGLATVAKALAKVQDVVNTQGQALSHLTVQLQNNFQAISSSISDIYNRLDELSADAQVDRLITGRLTALNAFVSQTLTRQAEVRASRQLAKDKVNECVRSQSQRFGFCGNGTHLFSLANAAPNGMIFFHTVLLPTAYETVTAWSGICASDGNRTFGLVVKDVQLTLFRNLDYKFYLTPRTMYQPRVATSSDFVQIEGCDVLFVNATVIELPSIIPDYIDINQTVQDILENFRPNWTVPELPLDIFNATYLNLTGEINDLEFRSEKLHNTTLELATLIDNINNTLVNLEWLNRIETYVKWPWYVWLLIGLVVIFCIPLLLFCCCSTGCCGCFGCIGSCCHSMCSRRQFESYEPIEKVHVH.

A signal peptide spans 1-31 (MIVLTLCLFLVLYNSVICTSNNECVQVNVTQ). The S1 stretch occupies residues 32-780 (LPGNENIIRD…WTTTPNFYYY (749 aa)). Topologically, residues 32-1394 (LPGNENIIRD…NRIETYVKWP (1363 aa)) are virion surface. The segment at 661–805 (VIYEEGDNIV…DSNDVDCEPI (145 aa)) is interaction with host ANPEP. The segment at 781–1453 (SIYNYTNERV…YEPIEKVHVH (673 aa)) is S2. A fusion peptide region spans residues 1026–1047 (AGGITLGALGGGAVSIPFAVAV). The interval 1041–1160 (IPFAVAVQAR…QVDRLITGRL (120 aa)) is heptad repeat 1 (HR1). Coiled coils occupy residues 1108–1152 (QDVV…DAQV) and 1342–1384 (TYLN…LEWL). Positions 1309–1406 (PDYIDINQTV…VWLLIGLVVI (98 aa)) are heptad repeat 2 (HR2). A helical membrane pass occupies residues 1395-1414 (WYVWLLIGLVVIFCIPLLLF). Residues 1415–1453 (CCCSTGCCGCFGCIGSCCHSMCSRRQFESYEPIEKVHVH) lie on the Intravirion side of the membrane. A KxHxx motif is present at residues 1449–1453 (KVHVH).

The protein belongs to the alphacoronaviruses spike protein family. As to quaternary structure, homotrimer. During virus morphogenesis, found in a complex with M and HE proteins. Interacts with host ANPEP.

Its subcellular location is the virion membrane. The protein resides in the host endoplasmic reticulum-Golgi intermediate compartment membrane. Functionally, S1 region attaches the virion to the cell membrane by interacting with host ANPEP/aminopeptidase N, initiating the infection. Binding to the receptor probably induces conformational changes in the S glycoprotein unmasking the fusion peptide of S2 region and activating membranes fusion. S2 region belongs to the class I viral fusion protein. Under the current model, the protein has at least 3 conformational states: pre-fusion native state, pre-hairpin intermediate state, and post-fusion hairpin state. During viral and target cell membrane fusion, the coiled coil regions (heptad repeats) regions assume a trimer-of-hairpins structure, positioning the fusion peptide in close proximity to the C-terminal region of the ectodomain. The formation of this structure appears to drive apposition and subsequent fusion of viral and target cell membranes. This is Spike glycoprotein from Canis lupus familiaris (Dog).